The chain runs to 156 residues: Histone H2B.2 (156 aa).

Composition is skewed to basic and acidic residues over residues 1–10 (MAPKKDEKPA) and 24–58 (AKAE…GEKK). Positions 1 to 63 (MAPKKDEKPA…DGEKKDKKKK (63 aa)) are disordered. N6-acetyllysine occurs at positions 40 and 41. K152 participates in a covalent cross-link: Glycyl lysine isopeptide (Lys-Gly) (interchain with G-Cter in ubiquitin).

It belongs to the histone H2B family. The nucleosome is a histone octamer containing two molecules each of H2A, H2B, H3 and H4 assembled in one H3-H4 heterotetramer and two H2A-H2B heterodimers. The octamer wraps approximately 147 bp of DNA. Post-translationally, the N-terminus is blocked. In terms of processing, can be acetylated to form H2BK33ac and H2BK34ac. Acetylated mainly on the ubiquitinated form. Monoubiquitinated to form H2BK143ub1; which is increased during the light period and may give a specific tag for epigenetic transcriptional activation.

The protein resides in the nucleus. The protein localises to the chromosome. In terms of biological role, core component of nucleosome. Nucleosomes wrap and compact DNA into chromatin, limiting DNA accessibility to the cellular machineries which require DNA as a template. Histones thereby play a central role in transcription regulation, DNA repair, DNA replication and chromosomal stability. DNA accessibility is regulated via a complex set of post-translational modifications of histones, also called histone code, and nucleosome remodeling. This is Histone H2B.2 from Chlamydomonas reinhardtii (Chlamydomonas smithii).